We begin with the raw amino-acid sequence, 372 residues long: Glutamate 5-kinase (372 aa).

ATP is bound at residue Lys-14. Substrate-binding residues include Ser-54, Asp-141, and Asn-153. 173–174 (TD) provides a ligand contact to ATP. The PUA domain maps to 280 to 358 (RGTVVIDDGA…SQIESLLGYS (79 aa)).

It belongs to the glutamate 5-kinase family.

The protein resides in the cytoplasm. It carries out the reaction L-glutamate + ATP = L-glutamyl 5-phosphate + ADP. The protein operates within amino-acid biosynthesis; L-proline biosynthesis; L-glutamate 5-semialdehyde from L-glutamate: step 1/2. Catalyzes the transfer of a phosphate group to glutamate to form L-glutamate 5-phosphate. This is Glutamate 5-kinase from Methylibium petroleiphilum (strain ATCC BAA-1232 / LMG 22953 / PM1).